The chain runs to 517 residues: MQLNPAEISELIKSRIEGLAASSDIRNQGTVVSVADGIVRIHGLSDVMQGEMLEFPATADGTPTYGLALNLERDSVGSVILGEYEHIAEGDTVKCTGRILEVPIGPELLGRVVNALGQPIDGKGPINAKLSDVIEKVAPGVIARKSVDQPLQTGLKSIDSMVPIGRGQRELIIGDRQTGKTAVAIDAIINQKGKGVSCVYVAIGQKASSIKNVVRSLEQAGAMDYTIVVAASASESAAMQYVSAYSGCTMGEYFRDRGEDALIVYDDLSKQAVAYRQVSLLLRRPPGREAYPGDVFYLHSRLLERAARVNEKYVEDFTKGAVKGKTGSLTALPIIETQAGDVSAFVPTNVISITDGQIFLETSLFNAGIRPAINAGISVSRVGGAAQTKLIKNLSGGIRTDLAQYRELAAFAQFASDLDEATRKQLDRGARVTELLKQSQYSPLSVSTMGATLFAVNKGFMDDVDVKKVLAFESGLHAWLKDKHAPLMAKLEANKAMDKDAEAELTTAVTAFKKSFA.

Residue G174–T181 coordinates ATP.

This sequence belongs to the ATPase alpha/beta chains family. In terms of assembly, F-type ATPases have 2 components, CF(1) - the catalytic core - and CF(0) - the membrane proton channel. CF(1) has five subunits: alpha(3), beta(3), gamma(1), delta(1), epsilon(1). CF(0) has three main subunits: a(1), b(2) and c(9-12). The alpha and beta chains form an alternating ring which encloses part of the gamma chain. CF(1) is attached to CF(0) by a central stalk formed by the gamma and epsilon chains, while a peripheral stalk is formed by the delta and b chains.

It is found in the cell inner membrane. It carries out the reaction ATP + H2O + 4 H(+)(in) = ADP + phosphate + 5 H(+)(out). In terms of biological role, produces ATP from ADP in the presence of a proton gradient across the membrane. The alpha chain is a regulatory subunit. This is ATP synthase subunit alpha 1 from Polaromonas naphthalenivorans (strain CJ2).